We begin with the raw amino-acid sequence, 495 residues long: MSSACRSLMVVGTSSHVGKTLLVAALCRLLKKAGKKVAPFKAQNMSLNAYVTPEGHEIAYAQALQAWAAGIPPAVEMNPILLKPQGNLTSQVVLNGVAVDTCRAGEYYERWFAPAWEAVKTALARLQQQYEWIICEGAGSPAEVNLKHRDLANTRVALHLGSPTWLVADIDRGGALAHVVGTLQLLEPAERALIRGIVINKFRGARELLQPGLDWLENYTGIPVVGVLPWLDWVLPQEDSMGLEAGPQLWENRRERAGRGSCLEIAVIRLPQVANFSDFDPLLAEPSVHLRWVHPGQSLGSPDVVILPGSKTTLKDLLALQKTGLADQLRLYSGHIVGICGGLQMLGQTIADPAGLEGVAGTYPGLGFLPLTTVLQPTKVTQQVQTQSRWPAPAPVQGYEIHQGSTQADPAGCLPIFEQEGLGWRDPTGRVWGSYLHGLFDNHRWRRHWLNELRRQKGWDPLPELEGHYAQQREELLDCLAEAWRPHLEWQQLLE.

The 184-residue stretch at 262–445 (CLEIAVIRLP…LHGLFDNHRW (184 aa)) folds into the GATase cobBQ-type domain. Cysteine 340 (nucleophile) is an active-site residue. Residue histidine 437 is part of the active site.

This sequence belongs to the CobB/CobQ family. CobQ subfamily.

It functions in the pathway cofactor biosynthesis; adenosylcobalamin biosynthesis. In terms of biological role, catalyzes amidations at positions B, D, E, and G on adenosylcobyrinic A,C-diamide. NH(2) groups are provided by glutamine, and one molecule of ATP is hydrogenolyzed for each amidation. The polypeptide is Cobyric acid synthase (Synechococcus sp. (strain JA-3-3Ab) (Cyanobacteria bacterium Yellowstone A-Prime)).